The primary structure comprises 235 residues: 2,3,4,5-tetrahydropyridine-2,6-dicarboxylate N-acetyltransferase (235 aa).

The protein belongs to the transferase hexapeptide repeat family. DapH subfamily.

The catalysed reaction is (S)-2,3,4,5-tetrahydrodipicolinate + acetyl-CoA + H2O = L-2-acetamido-6-oxoheptanedioate + CoA. It participates in amino-acid biosynthesis; L-lysine biosynthesis via DAP pathway; LL-2,6-diaminopimelate from (S)-tetrahydrodipicolinate (acetylase route): step 1/3. Its function is as follows. Catalyzes the transfer of an acetyl group from acetyl-CoA to tetrahydrodipicolinate. The polypeptide is 2,3,4,5-tetrahydropyridine-2,6-dicarboxylate N-acetyltransferase (Exiguobacterium sp. (strain ATCC BAA-1283 / AT1b)).